A 195-amino-acid polypeptide reads, in one-letter code: Glycerol-3-phosphate acyltransferase 2 (195 aa).

A run of 6 helical transmembrane segments spans residues 4–24, 52–72, 73–93, 115–135, 150–170, and 171–191; these read VVSLAVVFVLSYLLGSLVAGV, GAAAAVTLADILKGAAAVGLA, LWLAPQALPLATALATFGVVF, AMLVVAPWTLLATVTFALALI, AIPFATVVAVPVGLLIASRLG, and GGAEFLAGSAAMGIRAVHLLA.

This sequence belongs to the PlsY family. Probably interacts with PlsX.

It is found in the cell membrane. It catalyses the reaction an acyl phosphate + sn-glycerol 3-phosphate = a 1-acyl-sn-glycero-3-phosphate + phosphate. The protein operates within lipid metabolism; phospholipid metabolism. Catalyzes the transfer of an acyl group from acyl-phosphate (acyl-PO(4)) to glycerol-3-phosphate (G3P) to form lysophosphatidic acid (LPA). This enzyme utilizes acyl-phosphate as fatty acyl donor, but not acyl-CoA or acyl-ACP. In Deinococcus radiodurans (strain ATCC 13939 / DSM 20539 / JCM 16871 / CCUG 27074 / LMG 4051 / NBRC 15346 / NCIMB 9279 / VKM B-1422 / R1), this protein is Glycerol-3-phosphate acyltransferase 2.